The chain runs to 330 residues: Mitochondrial glycine transporter (330 aa).

3 Solcar repeats span residues Ser-11–Asn-94, Leu-122–Arg-206, and Thr-234–Arg-318. The next 6 helical transmembrane spans lie at Phe-17–Gln-42, Gly-69–Val-95, Leu-128–Glu-153, Gly-181–Lys-204, Ile-238–Ile-264, and Gly-293–Ile-311.

Belongs to the mitochondrial carrier (TC 2.A.29) family. SLC25A38 subfamily.

The protein localises to the mitochondrion inner membrane. It carries out the reaction glycine(in) = glycine(out). Mitochondrial glycine transporter that imports glycine into the mitochondrial matrix. Plays an important role in providing glycine for the first enzymatic step in heme biosynthesis, the condensation of glycine with succinyl-CoA to produce 5-aminolevulinate (ALA) in the mitochondrial matrix. In Sclerotinia sclerotiorum (strain ATCC 18683 / 1980 / Ss-1) (White mold), this protein is Mitochondrial glycine transporter.